Here is a 374-residue protein sequence, read N- to C-terminus: Flap endonuclease 1 (374 aa).

An N-domain region spans residues 1–105 (MGVKGLNKLI…GELEKRLLRR (105 aa)). Position 34 (aspartate 34) interacts with Mg(2+). Residues arginine 47 and arginine 71 each contribute to the DNA site. Residues aspartate 87, glutamate 159, glutamate 161, aspartate 180, and aspartate 182 each coordinate Mg(2+). An I-domain region spans residues 123–254 (DHLKFEKRLV…VTAYKLIKEH (132 aa)). Glutamate 159 contributes to the DNA binding site. Residues glycine 232 and aspartate 234 each coordinate DNA. Aspartate 234 serves as a coordination point for Mg(2+). Positions 339–347 (VQGRLDSFF) are interaction with PCNA. The disordered stretch occupies residues 353-374 (DDGKDKKRKSTAKDTKSKKQKK).

It belongs to the XPG/RAD2 endonuclease family. FEN1 subfamily. As to quaternary structure, interacts with PCNA. Three molecules of RAD27 bind to one PCNA trimer with each molecule binding to one PCNA monomer. PCNA stimulates the nuclease activity without altering cleavage specificity. The cofactor is Mg(2+). Phosphorylated. Phosphorylation upon DNA damage induces relocalization to the nuclear plasma.

It is found in the nucleus. The protein localises to the nucleolus. The protein resides in the nucleoplasm. Its subcellular location is the mitochondrion. Functionally, structure-specific nuclease with 5'-flap endonuclease and 5'-3' exonuclease activities involved in DNA replication and repair. During DNA replication, cleaves the 5'-overhanging flap structure that is generated by displacement synthesis when DNA polymerase encounters the 5'-end of a downstream Okazaki fragment. It enters the flap from the 5'-end and then tracks to cleave the flap base, leaving a nick for ligation. Also involved in the long patch base excision repair (LP-BER) pathway, by cleaving within the apurinic/apyrimidinic (AP) site-terminated flap. Acts as a genome stabilization factor that prevents flaps from equilibrating into structures that lead to duplications and deletions. Also possesses 5'-3' exonuclease activity on nicked or gapped double-stranded DNA, and exhibits RNase H activity. Also involved in replication and repair of rDNA and in repairing mitochondrial DNA. The protein is Flap endonuclease 1 of Candida tropicalis (strain ATCC MYA-3404 / T1) (Yeast).